A 1088-amino-acid chain; its full sequence is RNA-directed RNA polymerase (1088 aa).

Positions L501–I687 constitute a RdRp catalytic domain.

This sequence belongs to the reoviridae RNA-directed RNA polymerase family. Interacts with VP3 (Potential). Interacts with VP2; this interaction activates VP1. Interacts with NSP5; this interaction is probably necessary for the formation of functional virus factories. Interacts with NSP2; this interaction is weak. The cofactor is Mg(2+).

It is found in the virion. It carries out the reaction RNA(n) + a ribonucleoside 5'-triphosphate = RNA(n+1) + diphosphate. RNA-directed RNA polymerase that is involved in both transcription and genome replication. Together with VP3 capping enzyme, forms an enzyme complex positioned near the channels situated at each of the five-fold vertices of the core. Following infection, the outermost layer of the virus is lost, leaving a double-layered particle (DLP) made up of the core and VP6 shell. VP1 then catalyzes the transcription of fully conservative plus-strand genomic RNAs that are extruded through the DLP's channels into the cytoplasm where they function as mRNAs for translation of viral proteins. One copy of each of the viral (+)RNAs is also recruited during core assembly, together with newly synthesized polymerase complexes and VP2. The polymerase of these novo-formed particles catalyzes the synthesis of complementary minus-strands leading to dsRNA formation. To do so, the polymerase specifically recognizes and binds 4 bases 5'-UGUG-3' in the conserved 3'-sequence of plus-strand RNA templates. VP2 presumably activates the autoinhibited VP1-RNA complex to coordinate packaging and genome replication. Once dsRNA synthesis is complete, the polymerase switches to the transcriptional mode, thus providing secondary transcription. The sequence is that of RNA-directed RNA polymerase from Rotavirus A (strain RVA/SA11-Both/G3P5B[2]) (RV-A).